Here is a 419-residue protein sequence, read N- to C-terminus: L-rhamnose isomerase (419 aa).

Residues H262, D294, and D296 each coordinate Mn(2+).

It belongs to the rhamnose isomerase family. As to quaternary structure, homotetramer. Mn(2+) is required as a cofactor.

Its subcellular location is the cytoplasm. It carries out the reaction L-rhamnopyranose = L-rhamnulose. Its pathway is carbohydrate degradation; L-rhamnose degradation; glycerone phosphate from L-rhamnose: step 1/3. Functionally, catalyzes the interconversion of L-rhamnose and L-rhamnulose. The sequence is that of L-rhamnose isomerase from Escherichia fergusonii (strain ATCC 35469 / DSM 13698 / CCUG 18766 / IAM 14443 / JCM 21226 / LMG 7866 / NBRC 102419 / NCTC 12128 / CDC 0568-73).